A 556-amino-acid chain; its full sequence is Serine/threonine-protein kinase PksC (556 aa).

Positions 20 to 287 constitute a Protein kinase domain; that stretch reads YQLRDLLGEG…SAEAMRDECL (268 aa). ATP is bound by residues 26 to 34 and Lys49; that span reads LGEGGMASV. Residue Asp151 is the Proton acceptor of the active site. Disordered regions lie at residues 300–403 and 435–485; these read IVPG…PGGK and EDPE…DPDK. A compositionally biased stretch (pro residues) spans 336–348; that stretch reads QPTPSPGPNPYGT. Low complexity-rich tracts occupy residues 360–381 and 445–458; these read YPQQ…QAAA and STAS…KAAG. Residues 461 to 475 show a composition bias toward basic and acidic residues; it reads GPDKEKTIEKDKCTE. One can recognise a PASTA domain in the interval 482-550; sequence DPDKIQVPDF…MPEIQLKVST (69 aa).

This sequence belongs to the protein kinase superfamily. Ser/Thr protein kinase family.

The enzyme catalyses L-seryl-[protein] + ATP = O-phospho-L-seryl-[protein] + ADP + H(+). The catalysed reaction is L-threonyl-[protein] + ATP = O-phospho-L-threonyl-[protein] + ADP + H(+). The sequence is that of Serine/threonine-protein kinase PksC (pksC) from Streptomyces coelicolor (strain ATCC BAA-471 / A3(2) / M145).